The primary structure comprises 317 residues: Transaldolase (317 aa).

Lysine 132 (schiff-base intermediate with substrate) is an active-site residue.

It belongs to the transaldolase family. Type 1 subfamily. As to quaternary structure, homodimer.

It is found in the cytoplasm. The enzyme catalyses D-sedoheptulose 7-phosphate + D-glyceraldehyde 3-phosphate = D-erythrose 4-phosphate + beta-D-fructose 6-phosphate. Its pathway is carbohydrate degradation; pentose phosphate pathway; D-glyceraldehyde 3-phosphate and beta-D-fructose 6-phosphate from D-ribose 5-phosphate and D-xylulose 5-phosphate (non-oxidative stage): step 2/3. In terms of biological role, transaldolase is important for the balance of metabolites in the pentose-phosphate pathway. This Haemophilus influenzae (strain PittGG) protein is Transaldolase.